Consider the following 140-residue polypeptide: Putative nickel-responsive regulator 3 (140 aa).

Positions 81, 92, 94, and 100 each coordinate Ni(2+).

This sequence belongs to the transcriptional regulatory CopG/NikR family. Ni(2+) serves as cofactor.

Transcriptional regulator. The chain is Putative nickel-responsive regulator 3 from Methanosarcina mazei (strain ATCC BAA-159 / DSM 3647 / Goe1 / Go1 / JCM 11833 / OCM 88) (Methanosarcina frisia).